The primary structure comprises 270 residues: tRNA pseudouridine synthase A (270 aa).

The active-site Nucleophile is Asp-52. Tyr-110 contacts substrate.

It belongs to the tRNA pseudouridine synthase TruA family. In terms of assembly, homodimer.

It catalyses the reaction uridine(38/39/40) in tRNA = pseudouridine(38/39/40) in tRNA. In terms of biological role, formation of pseudouridine at positions 38, 39 and 40 in the anticodon stem and loop of transfer RNAs. In Roseiflexus castenholzii (strain DSM 13941 / HLO8), this protein is tRNA pseudouridine synthase A.